Reading from the N-terminus, the 63-residue chain is Muscarinic toxin 2 (63 aa).

Cystine bridges form between cysteine 3/cysteine 22, cysteine 17/cysteine 42, cysteine 44/cysteine 55, and cysteine 56/cysteine 61.

It belongs to the three-finger toxin family. Short-chain subfamily. Type B muscarinic toxin sub-subfamily. In terms of assembly, monomer. Expressed by the venom gland.

The protein resides in the secreted. Its function is as follows. Blocks M2 muscarinic acetylcholine receptors (CHRM2). Fully blocks the binding of N-methylscopolamine (NMS) and oxotremorine-M to M2 receptors, slightly increased NMS binding to M1 receptors. The chain is Muscarinic toxin 2 from Dendroaspis angusticeps (Eastern green mamba).